We begin with the raw amino-acid sequence, 306 residues long: Aspartate carbamoyltransferase catalytic subunit (306 aa).

2 residues coordinate carbamoyl phosphate: R55 and T56. K84 contacts L-aspartate. Positions 105, 133, and 136 each coordinate carbamoyl phosphate. R166 and R227 together coordinate L-aspartate. 2 residues coordinate carbamoyl phosphate: L265 and P266.

This sequence belongs to the aspartate/ornithine carbamoyltransferase superfamily. ATCase family. Heterododecamer (2C3:3R2) of six catalytic PyrB chains organized as two trimers (C3), and six regulatory PyrI chains organized as three dimers (R2).

It catalyses the reaction carbamoyl phosphate + L-aspartate = N-carbamoyl-L-aspartate + phosphate + H(+). The protein operates within pyrimidine metabolism; UMP biosynthesis via de novo pathway; (S)-dihydroorotate from bicarbonate: step 2/3. Its function is as follows. Catalyzes the condensation of carbamoyl phosphate and aspartate to form carbamoyl aspartate and inorganic phosphate, the committed step in the de novo pyrimidine nucleotide biosynthesis pathway. The polypeptide is Aspartate carbamoyltransferase catalytic subunit (Aeromonas salmonicida (strain A449)).